The sequence spans 150 residues: 3-hydroxyacyl-[acyl-carrier-protein] dehydratase FabZ (150 aa).

His-51 is a catalytic residue.

Belongs to the thioester dehydratase family. FabZ subfamily.

It is found in the cytoplasm. The enzyme catalyses a (3R)-hydroxyacyl-[ACP] = a (2E)-enoyl-[ACP] + H2O. Functionally, involved in unsaturated fatty acids biosynthesis. Catalyzes the dehydration of short chain beta-hydroxyacyl-ACPs and long chain saturated and unsaturated beta-hydroxyacyl-ACPs. The polypeptide is 3-hydroxyacyl-[acyl-carrier-protein] dehydratase FabZ (Geobacter metallireducens (strain ATCC 53774 / DSM 7210 / GS-15)).